Consider the following 373-residue polypeptide: Probable di-N-acetylchitobiase 1 (373 aa).

Positions 1 to 20 are cleaved as a signal peptide; that stretch reads MKIFIIISLILTILIIQSKS. The GH18 domain maps to 21-369; it reads KECPCSNVEL…SGMWGALNSF (349 aa). A glycan (N-linked (GlcNAc...) asparagine) is linked at Asn-48. Residues 53–54 and 82–85 each bind chitin; these read PY and NGVR. Asn-99 carries an N-linked (GlcNAc...) asparagine glycan. The Proton donor role is filled by Glu-127. Residues Tyr-128 and 191-194 contribute to the chitin site; that span reads MDYD. 5 N-linked (GlcNAc...) asparagine glycosylation sites follow: Asn-222, Asn-250, Asn-269, Asn-279, and Asn-288. Trp-347 is a binding site for chitin.

This sequence belongs to the glycosyl hydrolase 18 family.

It is found in the lysosome. In terms of biological role, involved in the degradation of asparagine-linked glycoproteins. May hydrolyze of N-acetyl-beta-D-glucosamine (1-4)N-acetylglucosamine chitobiose core from the reducing end of the bond. The polypeptide is Probable di-N-acetylchitobiase 1 (ctbs1) (Dictyostelium discoideum (Social amoeba)).